The following is a 37-amino-acid chain: Large ribosomal subunit protein bL36 (37 aa).

This sequence belongs to the bacterial ribosomal protein bL36 family.

This is Large ribosomal subunit protein bL36 from Prochlorococcus marinus (strain MIT 9313).